Here is a 138-residue protein sequence, read N- to C-terminus: Actophorin (138 aa).

Position 2 is a blocked amino end (Ser) (serine 2). The 132-residue stretch at 3–134 folds into the ADF-H domain; that stretch reads GIAVSDDCVQ…SEDAVSERAK (132 aa).

This sequence belongs to the actin-binding proteins ADF family. Monomer.

The protein localises to the cytoplasm. Forms a one to one complex with monomeric actin. Can regulate the pool available for polymerization. Severs actin filaments in a dose-dependent manner. This Acanthamoeba castellanii (Amoeba) protein is Actophorin.